The sequence spans 155 residues: MKIGLCAYSGYKIYPGHGKTMVKVDGKTFTFLNSKCEAAHLMRRNPRKVTWTVLYRRKFKKGQEEEQTKKRTRRTQKYQRAIVGASLSDIMAKRNMKPEVRKAQRDQAIKAAKEQKKSTKAAKKASAPAPKAKAAPKAKAAKVSQKSAPRVGGKR.

The disordered stretch occupies residues 92-155 (AKRNMKPEVR…KSAPRVGGKR (64 aa)). The segment covering 96–117 (MKPEVRKAQRDQAIKAAKEQKK) has biased composition (basic and acidic residues). Residues 124–133 (KASAPAPKAK) are compositionally biased toward low complexity.

Belongs to the eukaryotic ribosomal protein eL24 family.

This is Large ribosomal subunit protein eL24 (RpL24) from Spodoptera frugiperda (Fall armyworm).